We begin with the raw amino-acid sequence, 400 residues long: Glycerol-3-phosphate dehydrogenase [NAD(+)] 1, chloroplastic (400 aa).

A chloroplast-targeting transit peptide spans M1 to S32. Residues G61–G66, F92, F149, K172, and A205 each bind NAD(+). K172 lines the substrate pocket. The Proton acceptor role is filled by K257. NAD(+) is bound by residues R321, K350, and Q352. Residue R321 to N322 participates in substrate binding.

It belongs to the NAD-dependent glycerol-3-phosphate dehydrogenase family. As to expression, expressed in young seedlings, flowers and siliques. Expressed at low levels in roots.

Its subcellular location is the plastid. It is found in the chloroplast. It catalyses the reaction sn-glycerol 3-phosphate + NAD(+) = dihydroxyacetone phosphate + NADH + H(+). Its pathway is membrane lipid metabolism; glycerophospholipid metabolism. Involved in glycerolipid metabolism. The sequence is that of Glycerol-3-phosphate dehydrogenase [NAD(+)] 1, chloroplastic (DHAPRD) from Arabidopsis thaliana (Mouse-ear cress).